The following is a 353-amino-acid chain: Guanine nucleotide-binding protein G(q) subunit alpha (353 aa).

2 S-palmitoyl cysteine lipidation sites follow: Cys-3 and Cys-4. The 322-residue stretch at 32 to 353 (RELKLLLLGT…QLNLKEYNLV (322 aa)) folds into the G-alpha domain. Residues 35 to 48 (KLLLLGTGESGKST) form a G1 motif region. GTP-binding positions include 40–47 (GTGESGKS), 174–180 (LRVRVPT), 199–203 (DVGGQ), 268–271 (NKKD), and Ala-325. Mg(2+) contacts are provided by Ser-47 and Thr-180. The tract at residues 172-180 (DILRVRVPT) is G2 motif. Positions 195–204 (FRMVDVGGQR) are G3 motif. The G4 motif stretch occupies residues 264-271 (ILFLNKKD). The segment at 323–328 (TCATDT) is G5 motif.

Belongs to the G-alpha family. G(q) subfamily. G proteins are composed of 3 units; alpha, beta and gamma. The alpha chain contains the guanine nucleotide binding site.

Functionally, guanine nucleotide-binding proteins (G proteins) are involved as modulators or transducers in various transmembrane signaling systems. This is Guanine nucleotide-binding protein G(q) subunit alpha from Lymnaea stagnalis (Great pond snail).